We begin with the raw amino-acid sequence, 182 residues long: Protein Syd (182 aa).

Belongs to the Syd family.

The protein localises to the cell inner membrane. In terms of biological role, interacts with the SecY protein in vivo. May bind preferentially to an uncomplexed state of SecY, thus functioning either as a chelating agent for excess SecY in the cell or as a regulatory factor that negatively controls the translocase function. This is Protein Syd from Aeromonas hydrophila subsp. hydrophila (strain ATCC 7966 / DSM 30187 / BCRC 13018 / CCUG 14551 / JCM 1027 / KCTC 2358 / NCIMB 9240 / NCTC 8049).